A 360-amino-acid polypeptide reads, in one-letter code: DNA replication and repair protein RecF (360 aa).

Glycine 30–threonine 37 is an ATP binding site.

This sequence belongs to the RecF family.

Its subcellular location is the cytoplasm. Functionally, the RecF protein is involved in DNA metabolism; it is required for DNA replication and normal SOS inducibility. RecF binds preferentially to single-stranded, linear DNA. It also seems to bind ATP. In Acinetobacter baumannii (strain AB307-0294), this protein is DNA replication and repair protein RecF.